Consider the following 269-residue polypeptide: Cbp/p300-interacting transactivator 2 (269 aa).

Positions 142–200 (AGHQMNGTNQHFRDCNPKHSGGSSTPGGAGGSGTPGGSGGTSGGAGGSSAGGSGGGSTM) are disordered. A compositionally biased stretch (gly residues) spans 165 to 198 (STPGGAGGSGTPGGSGGTSGGAGGSSAGGSGGGS).

Belongs to the CITED family. Interacts (via C-terminus) with EP300 (via CH1 domain); the interaction is stimulated in response to hypoxia. Interacts with PPARA. Interacts (via C-terminus) with TFAP2A, TFAP2B and TFAP2C. Interacts (via C-terminus) with SMAD2. Interacts (via C-terminus) with SMAD3 (via MH2 domain). Interacts with LHX2 (via LIM domains). Interacts with WT1 isoform 1 and isoform 3. In terms of tissue distribution, ubiquitous.

Its subcellular location is the nucleus. Functionally, transcriptional coactivator of the p300/CBP-mediated transcription complex. Acts as a bridge, linking TFAP2 transcription factors and the p300/CBP transcriptional coactivator complex in order to stimulate TFAP2-mediated transcriptional activation. Positively regulates TGF-beta signaling through its association with the SMAD/p300/CBP-mediated transcriptional coactivator complex. Stimulates the peroxisome proliferator-activated receptors PPARA transcriptional activity. Enhances estrogen-dependent transactivation mediated by estrogen receptors. Also acts as a transcriptional corepressor; interferes with the binding of the transcription factors HIF1A or STAT2 and the p300/CBP transcriptional coactivator complex. Participates in sex determination and early gonad development by stimulating transcription activation of SRY. Plays a role in controlling left-right patterning during embryogenesis; potentiates transcriptional activation of NODAL-mediated gene transcription in the left lateral plate mesoderm (LPM). Plays an essential role in differentiation of the adrenal cortex from the adrenogonadal primordium (AGP); stimulates WT1-mediated transcription activation thereby up-regulating the nuclear hormone receptor NR5A1 promoter activity. Associates with chromatin to the PITX2 P1 promoter region. The protein is Cbp/p300-interacting transactivator 2 (Cited2) of Mus musculus (Mouse).